A 652-amino-acid polypeptide reads, in one-letter code: Potassium voltage-gated channel subfamily KQT member 1 (652 aa).

Over 1 to 110 the chain is Cytoplasmic; sequence MSSEQPAWTF…YNFLERPTGW (110 aa). A helical transmembrane segment spans residues 111 to 132; that stretch reads KCFVYHFTVFLIVLICLIFSVL. Residues 133–143 are Extracellular-facing; sequence STIQQYNNLAT. Residues 144-166 form a helical membrane-spanning segment; that stretch reads ETLFWMEIVLVVFFGAEYVVRLW. Residues 167–182 lie on the Cytoplasmic side of the membrane; that stretch reads SAGCRSKYVGVWGRLR. Residues 183–208 form a helical membrane-spanning segment; that stretch reads FARKPISVIDLIVVVASVIVLCVGSN. Residues 209–216 lie on the Extracellular side of the membrane; that stretch reads GQVFATSA. Residues 217–232 form a helical; Voltage-sensor membrane-spanning segment; it reads IRGIRFLQILRMLHVD. The tract at residues 228–236 is interaction with KCNE3; the sequence is MLHVDRQGG. Topologically, residues 233–250 are cytoplasmic; sequence RQGGTWRLLGSVVFIHRQ. Residue glutamine 234 coordinates a 1,2-diacyl-sn-glycero-3-phospho-(1D-myo-inositol-4,5-bisphosphate). The helical transmembrane segment at 251–273 threads the bilayer; sequence ELITTLYIGFLGLIFSSYFVYLA. The Extracellular portion of the chain corresponds to 274–289; sequence EKDAIDSSGEYQFGSY. The segment at residues 290-310 is an intramembrane region (pore-forming); sequence ADALWWGVVTVTTIGYGDKVP. Residues 311–312 lie on the Extracellular side of the membrane; the sequence is QT. The chain crosses the membrane as a helical span at residues 313–338; sequence WIGKTIASCFSVFAISFFALPAGILG. Over 339-652 the chain is Cytoplasmic; that stretch reads SGFALKVQQK…VPRMTQDNIS (314 aa). The interval 360 to 372 is interaction with CALM; it reads AAASLIQTAWRCY. The interval 393–419 is disordered; it reads HHLMSPSPKPKKSAMVKKKKIRTERDE. Residues 401–414 show a composition bias toward basic residues; that stretch reads KPKKSAMVKKKKIR. An interaction with CALM; calcium-dependent region spans residues 504-518; it reads KVIRRMQYFVAKKKF. An interaction with KCNE1 C-terminus region spans residues 524-561; that stretch reads PYDVRDVIEQYSQGHLNLMVRIKELQRRLDQSLGKPSL. An interaction with AKAP9 region spans residues 577–605; the sequence is IGSRLNRVEDKVTQMDHKLNLITDMLHHL. Residues 578 to 609 form a C-terminal assembly domain (tetramerization) region; the sequence is GSRLNRVEDKVTQMDHKLNLITDMLHHLLTNQ. Residues 609 to 652 are disordered; it reads QQGSQSIRTPHRSNSLNSENHPSRNTLPTYEQLNVPRMTQDNIS.

This sequence belongs to the potassium channel family. KQT (TC 1.A.1.15) subfamily. Kv7.1/KCNQ1 sub-subfamily. Tetramer. Heterotetramer with KCNE1; targets to the membrane raft. Interacts (via C-terminus) with CALM; forms a heterotetramer in a calcium-independent manner. Interacts with KCNE2; form a heterooligomer complex that targets to the membrane raft and leading to currents with an apparently instantaneous activation, a rapid deactivation process and a linear current-voltage relationship and decreases the amplitude of the outward current. Interacts with KCNE3; four KCNE3 molecules are bound to one KCNQ1 tetramer (4:4 KCNQ1:KCNE3 stoichiometry); alters membrane raft localization; affects KCNQ1 structure and gating properties. Interacts with KCNE4; impairs KCNQ1 localization in lipid rafts and inhibits voltage-gated potassium channel activity. Interacts with KCNE5; impairs KCNQ1 localization in lipid rafts and only conducts current upon strong and continued depolarization.

It localises to the cell membrane. The protein localises to the cytoplasmic vesicle membrane. Its subcellular location is the membrane raft. The protein resides in the endoplasmic reticulum. It is found in the basolateral cell membrane. It carries out the reaction K(+)(in) = K(+)(out). Its activity is regulated as follows. PIP2 molecule is essential to activate KCNQ channels by inducing the coupling of the voltage-sensing domain (VSD) and the pore-forming domain (PD). Upon channel activation, PIP2 disrupts the VSD-calmodulin/CALM interactions, causing the release of CALM from the VSD which triggers the opening of the gate. Calcium potentiates KCNQ1 channel current through calcium-bound CALM. Calcium-bound CALM competes with PIP2 to stabilize the channel open state. Its function is as follows. Pore-forming subunit of the voltage-gated potassium (Kv) channel involved in the regulation of cardiomyocyte excitability and important in normal development and functions of myocardium, inner ear, stomach and colon. Associates with KCNE beta subunits that modulates current kinetics. Induces a voltage-dependent by rapidly activating and slowly deactivating potassium-selective outward current. Also promotes a delayed voltage activated potassium current showing outward rectification characteristic. During beta-adrenergic receptor stimulation participates in cardiac repolarization by associating with KCNE1 to form the I(Ks) cardiac potassium current that increases the amplitude and slows down the activation kinetics of outward potassium current I(Ks). When associated with KCNE3, forms the potassium channel that is important for cyclic AMP-stimulated intestinal secretion of chloride ions. When associated with KCNE2, forms a heterooligomer complex leading to currents with an apparently instantaneous activation, a rapid deactivation process and a linear current-voltage relationship and decreases the amplitude of the outward current. When associated with KCNE4, inhibits voltage-gated potassium channel activity. When associated with KCNE5, this complex only conducts current upon strong and continued depolarization. The sequence is that of Potassium voltage-gated channel subfamily KQT member 1 from Xenopus laevis (African clawed frog).